A 492-amino-acid chain; its full sequence is Glutamyl-tRNA(Gln) amidotransferase subunit A (492 aa).

Residues Lys80 and Ser155 each act as charge relay system in the active site. Ser179 (acyl-ester intermediate) is an active-site residue.

The protein belongs to the amidase family. GatA subfamily. Heterotrimer of A, B and C subunits.

It carries out the reaction L-glutamyl-tRNA(Gln) + L-glutamine + ATP + H2O = L-glutaminyl-tRNA(Gln) + L-glutamate + ADP + phosphate + H(+). Allows the formation of correctly charged Gln-tRNA(Gln) through the transamidation of misacylated Glu-tRNA(Gln) in organisms which lack glutaminyl-tRNA synthetase. The reaction takes place in the presence of glutamine and ATP through an activated gamma-phospho-Glu-tRNA(Gln). This is Glutamyl-tRNA(Gln) amidotransferase subunit A from Mycobacteroides abscessus (strain ATCC 19977 / DSM 44196 / CCUG 20993 / CIP 104536 / JCM 13569 / NCTC 13031 / TMC 1543 / L948) (Mycobacterium abscessus).